We begin with the raw amino-acid sequence, 184 residues long: MSNNESYEILKFGLEHFDKEGKNNNHNNNNNNNNNNNTFNIFETHIESLRNESKMLSELLKKNLQSELLNLPNSIRKMSMEEFLQHCLDIDAINVTSVPTLINNKDNNSETEQQQQQQQNGNNGLSLTELLFSPEKSVNEIDNSNSNTSIDSESMNNIKQKVIDILNSPQLILKKKGFNSNNNL.

This is an uncharacterized protein from Dictyostelium discoideum (Social amoeba).